The sequence spans 351 residues: DNA polymerase IV (351 aa).

In terms of domain architecture, UmuC spans 4–185 (IIHVDMDCFF…LPLAKIPGVG (182 aa)). Mg(2+)-binding residues include D8 and D103. Residue E104 is part of the active site.

It belongs to the DNA polymerase type-Y family. In terms of assembly, monomer. The cofactor is Mg(2+).

The protein localises to the cytoplasm. The enzyme catalyses DNA(n) + a 2'-deoxyribonucleoside 5'-triphosphate = DNA(n+1) + diphosphate. In terms of biological role, poorly processive, error-prone DNA polymerase involved in untargeted mutagenesis. Copies undamaged DNA at stalled replication forks, which arise in vivo from mismatched or misaligned primer ends. These misaligned primers can be extended by PolIV. Exhibits no 3'-5' exonuclease (proofreading) activity. May be involved in translesional synthesis, in conjunction with the beta clamp from PolIII. This Escherichia coli O139:H28 (strain E24377A / ETEC) protein is DNA polymerase IV.